Reading from the N-terminus, the 351-residue chain is uncharacterized protein (351 aa).

Residues 14–69 (PRLADIAAQAQVSEATASRVLNGRPASRXSTRQRVLAALDLLGYERPTRLRRRSAG) enclose the HTH lacI-type domain. A DNA-binding region (H-T-H motif) is located at residues 16-35 (LADIAAQAQVSEATASRVLN).

Its function is as follows. Putative sugar-binding regulatory protein for the alpha-amylase gene. This is an uncharacterized protein from Streptomyces limosus (Streptomyces albidoflavus).